Here is a 224-residue protein sequence, read N- to C-terminus: Heme response regulator HssR (224 aa).

Residues 3–116 (QCLVVDDDPR…ELIFRIRAVL (114 aa)) form the Response regulatory domain. At D52 the chain carries 4-aspartylphosphate. The ompR/PhoB-type DNA-binding region spans 124–222 (NSEMTIGNLT…VRGQGYKVEN (99 aa)).

In terms of processing, phosphorylated by HssS.

The protein localises to the cytoplasm. Member of the two-component regulatory system HssS/HssR involved in intracellular heme homeostasis and tempering of staphylococcal virulence. Phosphorylated HssR binds to a direct repeat sequence within hrtAB promoter and activates the expression of hrtAB, an efflux pump, in response to extracellular heme, hemin, hemoglobin or blood. This chain is Heme response regulator HssR (hssR), found in Staphylococcus aureus (strain MRSA252).